The primary structure comprises 759 residues: Cullin-4A (759 aa).

K8 is covalently cross-linked (Glycyl lysine isopeptide (Lys-Gly) (interchain with G-Cter in SUMO2)). S10 bears the Phosphoserine mark. A Glycyl lysine isopeptide (Lys-Gly) (interchain with G-Cter in ubiquitin) cross-link involves residue K33. One can recognise a Cullin neddylation domain in the interval 691–751 (DRQYQIDAAI…RDYMERDKDN (61 aa)). A Glycyl lysine isopeptide (Lys-Gly) (interchain with G-Cter in NEDD8) cross-link involves residue K705.

The protein belongs to the cullin family. In terms of assembly, can self-associate. Component of multiple DCX (DDB1-CUL4-X-box) E3 ubiquitin-protein ligase complexes that seem to consist of DDB1, CUL4A or CUL4B, RBX1 and a variable substrate recognition component which seems to belong to a protein family described as DCAF (Ddb1- and Cul4-associated factor) or CDW (CUL4-DDB1-associated WD40-repeat) proteins. Component of the CSA complex (DCX(ERCC8) complex) containing ERCC8, RBX1, DDB1 and CUL4A; the CSA complex interacts with RNA polymerase II; upon UV irradiation it interacts with the COP9 signalosome and preferentially with the hyperphosphorylated form of RNA polymerase II. Component of the DCX(DET1-COP1) complex with the substrate recognition component DET1 and COP1. Component of the DCX(DDB2) complex with the substrate recognition component DDB2. Component of the DCX(DTL) complex with the putative substrate recognition component DTL. Component of DCX complexes part of the DesCEND (destruction via C-end degrons) pathway, which contain either TRPC4AP or DCAF12 as substrate-recognition component. Component of the DCX(AMBRA1) complex with the substrate recognition component AMBRA1. Interacts with DDB1, RBX1, RNF7, CDT1, TIP120A/CAND1, SKP2, CDKN1B, MDM2, TP53 and HOXA9. Interacts with DDB2; the interactions with DDB2 and CAND1 are mutually exclusive. Interacts with DCAF1, DTL, DDA1, DCAF6, DCAF4, DCAF16, DCAF17, DET1, WDTC1, DCAF5, DCAF11, WDR24A, COP1, PAFAH1B1, ERCC8, GRWD1, FBXW5, RBBP7, GNB2, WSB1, WSB2, NUP43, PWP1, FBXW8, ATG16L1, KATNB1, RBBP4, RBBP5, LRWD1 and DCAF8. May interact with WDR26, WDR51B, SNRNP40, WDR61, WDR76, WDR5. Interacts (when neddylated) with ARIH1; leading to activate the E3 ligase activity of ARIH1. The DDB1-CUL4A complex interacts with CRY1. Interacts (unneddylated form) with DCUN1D1, DCUN1D2, DCUN1D3, DCUN1D4 and DCUN1D5; these interactions promote the cullin neddylation. (Microbial infection) Interacts with Epstein-Barr virus BPLF1. In terms of processing, neddylated; required for activity of cullin-RING-based E3 ubiquitin-protein ligase complexes. Deneddylated via its interaction with the COP9 signalosome (CSN) complex. (Microbial infection) Deneddylated by Epstein-Barr virus BPLF1 leading to a S-phase-like environment that is required for efficient replication of the viral genome.

It participates in protein modification; protein ubiquitination. Functionally, core component of multiple cullin-RING-based E3 ubiquitin-protein ligase complexes which mediate the ubiquitination of target proteins. As a scaffold protein may contribute to catalysis through positioning of the substrate and the ubiquitin-conjugating enzyme. The E3 ubiquitin-protein ligase activity of the complex is dependent on the neddylation of the cullin subunit and is inhibited by the association of the deneddylated cullin subunit with TIP120A/CAND1. The functional specificity of the E3 ubiquitin-protein ligase complex depends on the variable substrate recognition component. DCX(DET1-COP1) directs ubiquitination of JUN. DCX(DDB2) directs ubiquitination of XPC. DCX(DDB2) ubiquitinates histones H3-H4 and is required for efficient histone deposition during replication-coupled (H3.1) and replication-independent (H3.3) nucleosome assembly, probably by facilitating the transfer of H3 from ASF1A/ASF1B to other chaperones involved in histone deposition. DCX(DTL) plays a role in PCNA-dependent polyubiquitination of CDT1 and MDM2-dependent ubiquitination of p53/TP53 in response to radiation-induced DNA damage and during DNA replication. DCX(DTL) directs autoubiquitination of DTL. In association with DDB1 and SKP2 probably is involved in ubiquitination of CDKN1B/p27kip. Is involved in ubiquitination of HOXA9. The DDB1-CUL4A-DTL E3 ligase complex regulates the circadian clock function by mediating the ubiquitination and degradation of CRY1. The DCX(ERCC8) complex (also named CSA complex) plays a role in transcription-coupled repair (TCR). A number of DCX complexes (containing either TRPC4AP or DCAF12 as substrate-recognition component) are part of the DesCEND (destruction via C-end degrons) pathway, which recognizes a C-degron located at the extreme C terminus of target proteins, leading to their ubiquitination and degradation. The DCX(AMBRA1) complex is a master regulator of the transition from G1 to S cell phase by mediating ubiquitination of phosphorylated cyclin-D (CCND1, CCND2 and CCND3). The DCX(AMBRA1) complex also acts as a regulator of Cul5-RING (CRL5) E3 ubiquitin-protein ligase complexes by mediating ubiquitination and degradation of Elongin-C (ELOC) component of CRL5 complexes. With CUL4B, contributes to ribosome biogenesis. This chain is Cullin-4A, found in Homo sapiens (Human).